A 428-amino-acid polypeptide reads, in one-letter code: Light-independent protochlorophyllide reductase subunit N (428 aa).

Residues cysteine 29, cysteine 54, and cysteine 115 each contribute to the [4Fe-4S] cluster site.

The protein belongs to the BchN/ChlN family. Protochlorophyllide reductase is composed of three subunits; BchL, BchN and BchB. Forms a heterotetramer of two BchB and two BchN subunits. Requires [4Fe-4S] cluster as cofactor.

It catalyses the reaction chlorophyllide a + oxidized 2[4Fe-4S]-[ferredoxin] + 2 ADP + 2 phosphate = protochlorophyllide a + reduced 2[4Fe-4S]-[ferredoxin] + 2 ATP + 2 H2O. The protein operates within porphyrin-containing compound metabolism; bacteriochlorophyll biosynthesis (light-independent). Component of the dark-operative protochlorophyllide reductase (DPOR) that uses Mg-ATP and reduced ferredoxin to reduce ring D of protochlorophyllide (Pchlide) to form chlorophyllide a (Chlide). This reaction is light-independent. The NB-protein (BchN-BchB) is the catalytic component of the complex. The chain is Light-independent protochlorophyllide reductase subunit N from Cereibacter sphaeroides (strain ATCC 17029 / ATH 2.4.9) (Rhodobacter sphaeroides).